Consider the following 282-residue polypeptide: Ribosome biogenesis GTPase A (282 aa).

One can recognise a CP-type G domain in the interval 14-178 (RREVTEKLKL…LLDTPGILWP (165 aa)). Residues 58-61 (NKAD), 86-87 (NS), 130-135 (NVGKST), and Gly-174 each bind GTP.

It belongs to the TRAFAC class YlqF/YawG GTPase family. MTG1 subfamily. As to quaternary structure, interacts with ctc. Interacts with the immature 50S ribosome subunit. 2 molecules of rbgA bind to one 50S subunit.

It localises to the cytoplasm. Its function is as follows. Essential protein that is required for a late step of 50S ribosomal subunit assembly. Has GTPase activity that is stimulated by interaction with the immature 50S ribosome subunit. Binds to the 23S rRNA. Required for the association of ribosomal proteins rplP and rpmA with the large subunit. The polypeptide is Ribosome biogenesis GTPase A (Bacillus pumilus (strain SAFR-032)).